Here is a 53-residue protein sequence, read N- to C-terminus: Large ribosomal subunit protein uL30 (53 aa).

Belongs to the universal ribosomal protein uL30 family. In terms of assembly, part of the 50S ribosomal subunit.

This is Large ribosomal subunit protein uL30 from Deinococcus geothermalis (strain DSM 11300 / CIP 105573 / AG-3a).